We begin with the raw amino-acid sequence, 326 residues long: Interleukin-1-binding protein (326 aa).

Positions 1 to 18 (MSILPVIFLSIFFYSSFV) are cleaved as a signal peptide. Ig-like domains are found at residues 24–115 (PECI…LNLT), 122–212 (SNID…RIVK), and 221–322 (PSTM…KTVT). The cysteines at positions 48 and 99 are disulfide-linked. N-linked (GlcNAc...) asparagine; by host glycosylation is found at asparagine 80, asparagine 103, and asparagine 113. Cysteine 143 and cysteine 194 form a disulfide bridge. N-linked (GlcNAc...) asparagine; by host glycans are attached at residues asparagine 206 and asparagine 237. Cysteine 242 and cysteine 309 are disulfide-bonded.

It belongs to the interleukin-1 receptor family. Interacts with mouse Il1b.

Its subcellular location is the secreted. Functionally, may reduce the host inflammatory response by interacting with inteleukin-1 beta (Il1b) and thus decreasing the association between IL1B and its cellular receptor. The sequence is that of Interleukin-1-binding protein (OPG201) from Vaccinia virus (strain Western Reserve) (VACV).